We begin with the raw amino-acid sequence, 167 residues long: UPF0336 protein MAP_4109 (167 aa).

Positions 21–124 constitute a MaoC-like domain; that stretch reads GREQLRQFAL…RFGADIVVTK (104 aa).

The protein belongs to the UPF0336 family.

In Mycolicibacterium paratuberculosis (strain ATCC BAA-968 / K-10) (Mycobacterium paratuberculosis), this protein is UPF0336 protein MAP_4109.